The following is a 420-amino-acid chain: Subtilisin (420 aa).

The signal sequence occupies residues 1 to 31 (MKRSGKIFTTAMLAVTLMMPAMGVSANEGNA). Residues 32 to 111 (AAEGNEKFRV…DKPEALYNAM (80 aa)) constitute a propeptide that is removed on maturation. Residue Gln115 coordinates Ca(2+). The Peptidase S8 domain occupies 118–420 (PWGIKAIYNN…ASGFGFATVQ (303 aa)). The active-site Charge relay system is Asp145. Asp154 serves as a coordination point for Ca(2+). Active-site charge relay system residues include His182 and Ser360.

It belongs to the peptidase S8 family. The cofactor is Ca(2+).

The protein resides in the secreted. It catalyses the reaction Hydrolysis of proteins with broad specificity for peptide bonds, and a preference for a large uncharged residue in P1. Hydrolyzes peptide amides.. In terms of biological role, subtilisin is an extracellular alkaline serine protease, it catalyzes the hydrolysis of proteins and peptide amides. This is Subtilisin (sub1) from Bacillus sp. (strain TA39).